Reading from the N-terminus, the 178-residue chain is Cytochrome b6-f complex iron-sulfur subunit 3 (178 aa).

The chain crosses the membrane as a helical span at residues 20-42 (FITGATVAVTAGAALYPAGKFLI). One can recognise a Rieske domain in the interval 65–161 (PASQILAEPP…VAVIDNSILI (97 aa)). [2Fe-2S] cluster-binding residues include Cys107, His109, Cys125, and His128. Cys112 and Cys127 are joined by a disulfide.

It belongs to the Rieske iron-sulfur protein family. The 4 large subunits of the cytochrome b6-f complex are cytochrome b6, subunit IV (17 kDa polypeptide, PetD), cytochrome f and the Rieske protein, while the 4 small subunits are PetG, PetL, PetM and PetN. The complex functions as a dimer. [2Fe-2S] cluster serves as cofactor.

It is found in the cellular thylakoid membrane. It catalyses the reaction 2 oxidized [plastocyanin] + a plastoquinol + 2 H(+)(in) = 2 reduced [plastocyanin] + a plastoquinone + 4 H(+)(out). Component of the cytochrome b6-f complex, which mediates electron transfer between photosystem II (PSII) and photosystem I (PSI), cyclic electron flow around PSI, and state transitions. The chain is Cytochrome b6-f complex iron-sulfur subunit 3 from Nostoc sp. (strain PCC 7120 / SAG 25.82 / UTEX 2576).